We begin with the raw amino-acid sequence, 397 residues long: Elongation factor Tu-1 (397 aa).

Residues 10 to 206 (KPHVNIGTIG…AVDENIPEPE (197 aa)) enclose the tr-type G domain. The segment at 19 to 26 (GHIDHGKT) is G1. 19–26 (GHIDHGKT) contributes to the GTP binding site. Thr-26 contributes to the Mg(2+) binding site. The tract at residues 62-66 (GITIS) is G2. Positions 83-86 (DCPG) are G3. GTP contacts are provided by residues 83–87 (DCPGH) and 138–141 (NKAD). Residues 138–141 (NKAD) form a G4 region. The G5 stretch occupies residues 176–178 (SAL). Thr-386 carries the phosphothreonine modification.

This sequence belongs to the TRAFAC class translation factor GTPase superfamily. Classic translation factor GTPase family. EF-Tu/EF-1A subfamily. As to quaternary structure, monomer. In terms of processing, phosphorylated on threonine and serine.

The protein localises to the cytoplasm. It carries out the reaction GTP + H2O = GDP + phosphate + H(+). Its function is as follows. GTP hydrolase that promotes the GTP-dependent binding of aminoacyl-tRNA to the A-site of ribosomes during protein biosynthesis. This Streptomyces collinus protein is Elongation factor Tu-1.